A 155-amino-acid polypeptide reads, in one-letter code: Ribosomal RNA large subunit methyltransferase H (155 aa).

S-adenosyl-L-methionine-binding positions include Leu72, Gly103, and 122–127; that span reads LSPLTL.

Belongs to the RNA methyltransferase RlmH family. In terms of assembly, homodimer.

It localises to the cytoplasm. The catalysed reaction is pseudouridine(1915) in 23S rRNA + S-adenosyl-L-methionine = N(3)-methylpseudouridine(1915) in 23S rRNA + S-adenosyl-L-homocysteine + H(+). Functionally, specifically methylates the pseudouridine at position 1915 (m3Psi1915) in 23S rRNA. This is Ribosomal RNA large subunit methyltransferase H from Haemophilus influenzae (strain PittEE).